Here is a 143-residue protein sequence, read N- to C-terminus: Large ribosomal subunit protein uL13 (143 aa).

The protein belongs to the universal ribosomal protein uL13 family. In terms of assembly, part of the 50S ribosomal subunit.

Its function is as follows. This protein is one of the early assembly proteins of the 50S ribosomal subunit, although it is not seen to bind rRNA by itself. It is important during the early stages of 50S assembly. In Dichelobacter nodosus (strain VCS1703A), this protein is Large ribosomal subunit protein uL13.